Reading from the N-terminus, the 90-residue chain is Small ribosomal subunit protein uS15 (90 aa).

The protein belongs to the universal ribosomal protein uS15 family. Part of the 30S ribosomal subunit. Forms a bridge to the 50S subunit in the 70S ribosome, contacting the 23S rRNA.

In terms of biological role, one of the primary rRNA binding proteins, it binds directly to 16S rRNA where it helps nucleate assembly of the platform of the 30S subunit by binding and bridging several RNA helices of the 16S rRNA. Functionally, forms an intersubunit bridge (bridge B4) with the 23S rRNA of the 50S subunit in the ribosome. This chain is Small ribosomal subunit protein uS15, found in Herpetosiphon aurantiacus (strain ATCC 23779 / DSM 785 / 114-95).